The following is a 325-amino-acid chain: D site-binding protein (325 aa).

Disordered regions lie at residues 1–99, 127–200, and 229–255; these read MARP…APGL, GLPP…DTVE, and RFSE…EQKD. Gly residues predominate over residues 17 to 28; it reads GPAGTPPGGGAL. Low complexity-rich tracts occupy residues 29–38 and 57–80; these read LGLRSLLQGT and ALPA…PAGA. A Phosphoserine modification is found at S86. Pro residues predominate over residues 129-153; that stretch reads PPSPPPPGGPSPEPSPARTPAPSPG. Over residues 157–167 the composition is skewed to low complexity; it reads CGSASPRSSPG. The 64-residue stretch at 255–318 folds into the bZIP domain; sequence DEKYWSRRYK…SHYRAVLSRY (64 aa). Residues 257–279 form a basic motif region; that stretch reads KYWSRRYKNNEAAKRSRDARRLK. A leucine-zipper region spans residues 283–297; the sequence is ISVRAAFLEKENALL.

This sequence belongs to the bZIP family. PAR subfamily. Binds DNA as a homodimer or a heterodimer. Can form a heterodimer with TEF. Ubiquitously expressed. Expressed in the suprachiasmatic nuclei (SCN) and in most peripheral tissues, with a strong circadian rhythmicity.

The protein localises to the nucleus. Its function is as follows. This transcriptional activator recognizes and binds to the sequence 5'-RTTAYGTAAY-3' found in the promoter of genes such as albumin, CYP2A4 and CYP2A5. It is not essential for circadian rhythm generation, but modulates important clock output genes. May be a direct target for regulation by the circadian pacemaker component clock. May affect circadian period and sleep regulation. The sequence is that of D site-binding protein (DBP) from Homo sapiens (Human).